We begin with the raw amino-acid sequence, 116 residues long: uncharacterized protein (116 aa).

This sequence belongs to the BolA/IbaG family.

The protein resides in the mitochondrion. This is an uncharacterized protein from Schizosaccharomyces pombe (strain 972 / ATCC 24843) (Fission yeast).